The following is a 197-amino-acid chain: Recombination protein RecR (197 aa).

A C4-type zinc finger spans residues 57-72; the sequence is CSVCFGITEDDPCHLC. One can recognise a Toprim domain in the interval 79 to 174; the sequence is TTICVVEEPQ…RVTRLAHGIP (96 aa).

Belongs to the RecR family.

In terms of biological role, may play a role in DNA repair. It seems to be involved in an RecBC-independent recombinational process of DNA repair. It may act with RecF and RecO. This chain is Recombination protein RecR, found in Geotalea daltonii (strain DSM 22248 / JCM 15807 / FRC-32) (Geobacter daltonii).